A 216-amino-acid polypeptide reads, in one-letter code: Ion-translocating oxidoreductase complex subunit G (216 aa).

A helical membrane pass occupies residues 14 to 34 (ALVLGSFGFLAASFVSIIYVI). T181 carries the FMN phosphoryl threonine modification.

This sequence belongs to the RnfG family. The complex is composed of six subunits: RnfA, RnfB, RnfC, RnfD, RnfE and RnfG. FMN serves as cofactor.

It localises to the cell inner membrane. Functionally, part of a membrane-bound complex that couples electron transfer with translocation of ions across the membrane. In Buchnera aphidicola subsp. Baizongia pistaciae (strain Bp), this protein is Ion-translocating oxidoreductase complex subunit G.